Reading from the N-terminus, the 296-residue chain is NVPENSRGPFPQQLVRIRSDKDNDIPIRYSITGVGADQPPMEVFNIDSMSGRMYVTRPMDREERASYHLRAHAVDMNGNKVENPIDLYIYVIDMNDNRPEFINQVYNGSVDEGSKPGTYVMTVTANDADDSTTANGMVRYRIVTQTPQSPSQNMFTINSETGDIVTVAAGLDREKVQQYTVIVQATDMEGNLNYGLSNTATAIITVTDVNDNPPEFTTSTFAGEVPENRIETVVANLTVMDRDQPHSPNWNAVYRIISGDPSGHFSVRTDPVTNEGMVTVVKAVDYELNRAFMLTI.

3 consecutive Cadherin domains span residues 1-101 (NVPE…RPEF), 102-216 (INQV…PPEF), and 217-296 (TTST…MLTI). The Extracellular portion of the chain corresponds to 1-296 (NVPENSRGPF…ELNRAFMLTI (296 aa)). N-linked (GlcNAc...) asparagine glycosylation is found at asparagine 107 and asparagine 236.

The protein resides in the cell membrane. Functionally, cadherins are calcium-dependent cell adhesion proteins. They preferentially interact with themselves in a homophilic manner in connecting cells; cadherins may thus contribute to the sorting of heterogeneous cell types. May play an important role in retinal development. In Rattus norvegicus (Rat), this protein is Cadherin-4 (Cdh4).